A 230-amino-acid polypeptide reads, in one-letter code: Large ribosomal subunit protein uL3 (230 aa).

Disordered stretches follow at residues 125–149 and 210–230; these read QAIGPRSHGGGGGSKPIRQTGSLGD and PNPKNPVSLFVPNSDKEVKNE.

Belongs to the universal ribosomal protein uL3 family. Part of the 50S ribosomal subunit. Forms a cluster with proteins L14 and L19.

One of the primary rRNA binding proteins, it binds directly near the 3'-end of the 23S rRNA, where it nucleates assembly of the 50S subunit. The chain is Large ribosomal subunit protein uL3 from Mesomycoplasma hyopneumoniae (strain 232) (Mycoplasma hyopneumoniae).